A 347-amino-acid polypeptide reads, in one-letter code: Dolichyl-diphosphooligosaccharide--protein glycosyltransferase subunit TUSC3 (347 aa).

Residues 1–41 (MGARGAPSRRRQAGRRPRYLPTGSFPFLLLLLLLCIQLGGG) form the signal peptide. The Lumenal portion of the chain corresponds to 42-196 (QKKKENLLAE…DVHIRVFRPP (155 aa)). Residues 59–187 (WSSRRSVFRM…LAKWIADRTD (129 aa)) enclose the Thioredoxin domain. The N-linked (GlcNAc...) asparagine glycan is linked to N83. A disulfide bridge links C99 with C102. A helical membrane pass occupies residues 197–217 (NYSGTIALALLVSLVGGLLYL). Topologically, residues 218–221 (RRNN) are cytoplasmic. Residues 222–242 (LEFIYNKTGWAMVSLCIVFAM) form a helical membrane-spanning segment. Topologically, residues 243–276 (TSGQMWNHIRGPPYAHKNPHNGQVSYIHGSSQVQ) are lumenal. The helical transmembrane segment at 277–297 (FVAESHIILVLNAAITMGMDL) threads the bilayer. Topologically, residues 298-312 (LNEAATSKGDVGKRR) are cytoplasmic. A helical transmembrane segment spans residues 313–333 (IICLVGLGLVVFFFSFLLSIF). The Lumenal segment spans residues 334–347 (RSKYHGYPYSFLIK).

This sequence belongs to the OST3/OST6 family. As to quaternary structure, accessory component of the STT3B-containing form of the oligosaccharyltransferase (OST) complex. OST exists in two different complex forms which contain common core subunits RPN1, RPN2, OST48, OST4, DAD1 and TMEM258, either STT3A or STT3B as catalytic subunits, and form-specific accessory subunits. OST can form stable complexes with the Sec61 complex or with both the Sec61 and TRAP complexes. The association of TUSC3 or MAGT1 with the STT3B-containing complex seems to be mutually exclusvice.

It localises to the endoplasmic reticulum membrane. It functions in the pathway protein modification; protein glycosylation. Functionally, acts as accessory component of the N-oligosaccharyl transferase (OST) complex which catalyzes the transfer of a high mannose oligosaccharide from a lipid-linked oligosaccharide donor to an asparagine residue within an Asn-X-Ser/Thr consensus motif in nascent polypeptide chains. Involved in N-glycosylation of STT3B-dependent substrates. Specifically required for the glycosylation of a subset of acceptor sites that are near cysteine residues; in this function seems to act redundantly with MAGT1. In its oxidized form proposed to form transient mixed disulfides with a glycoprotein substrate to facilitate access of STT3B to the unmodified acceptor site. Also has oxidoreductase-independent functions in the STT3B-containing OST complex possibly involving substrate recognition. Could indirectly play a role in Mg(2+) transport. This is Dolichyl-diphosphooligosaccharide--protein glycosyltransferase subunit TUSC3 (TUSC3) from Bos taurus (Bovine).